A 689-amino-acid chain; its full sequence is DNA ligase (689 aa).

NAD(+) contacts are provided by residues 40 to 44, 89 to 90, and E121; these read DSEYD and SL. Residue K123 is the N6-AMP-lysine intermediate of the active site. NAD(+) contacts are provided by R144, E179, K295, and K319. Zn(2+) contacts are provided by C413, C416, C431, and C437. Residues 610-689 form the BRCT domain; sequence REQSGLTDKI…EEWLTLIKNV (80 aa).

This sequence belongs to the NAD-dependent DNA ligase family. LigA subfamily. It depends on Mg(2+) as a cofactor. Mn(2+) serves as cofactor.

The catalysed reaction is NAD(+) + (deoxyribonucleotide)n-3'-hydroxyl + 5'-phospho-(deoxyribonucleotide)m = (deoxyribonucleotide)n+m + AMP + beta-nicotinamide D-nucleotide.. Its function is as follows. DNA ligase that catalyzes the formation of phosphodiester linkages between 5'-phosphoryl and 3'-hydroxyl groups in double-stranded DNA using NAD as a coenzyme and as the energy source for the reaction. It is essential for DNA replication and repair of damaged DNA. This chain is DNA ligase, found in Rickettsia conorii (strain ATCC VR-613 / Malish 7).